Here is a 316-residue protein sequence, read N- to C-terminus: Peroxisomal targeting signal 2 receptor (316 aa).

6 WD repeats span residues 56–96 (DTRD…GGRP), 102–142 (EHTK…SLKT), 145–185 (EHRY…SLNT), 188–228 (AHDH…RPTT), 232–272 (GHTY…DPII), and 277–316 (HHTE…GQFR).

The protein belongs to the WD repeat peroxin-7 family. In terms of assembly, interacts with PEX5; interaction only takes place when PEX7 is associated with cargo proteins.

The protein resides in the cytoplasm. The protein localises to the cytosol. It is found in the peroxisome matrix. Functionally, receptor required for the peroxisomal import of proteins containing a C-terminal PTS2-type peroxisomal targeting signal. Specifically binds to cargo proteins containing a PTS2 peroxisomal targeting signal in the cytosol. Cargo protein-binding triggers interaction with PEX5 and formation of a ternary complex composed of PEX5 and PEX7 along with PTS2-containing cargo proteins, which is tranlocated into peroxisomes by passing through the PEX13-PEX14 docking complex. This is Peroxisomal targeting signal 2 receptor (pex7) from Dictyostelium discoideum (Social amoeba).